Here is a 947-residue protein sequence, read N- to C-terminus: Beta-glucosidase (947 aa).

Aspartate 696 is an active-site residue.

Belongs to the glycosyl hydrolase 3 family.

It carries out the reaction Hydrolysis of terminal, non-reducing beta-D-glucosyl residues with release of beta-D-glucose.. Its pathway is glycan metabolism; cellulose degradation. This Ruminococcus albus protein is Beta-glucosidase.